The following is a 912-amino-acid chain: Protein translocase subunit SecA (912 aa).

ATP is bound by residues Q87, 105–109 (GEGKT), and D508. A disordered region spans residues 864 to 912 (AEEEVEQMQGGNAPVPVSQVTRDEPKVGRNDPCPCGSGKKYKHCHGQLS). Positions 896, 898, 907, and 908 each coordinate Zn(2+). Over residues 902 to 912 (KKYKHCHGQLS) the composition is skewed to basic residues.

The protein belongs to the SecA family. Monomer and homodimer. Part of the essential Sec protein translocation apparatus which comprises SecA, SecYEG and auxiliary proteins SecDF-YajC and YidC. The cofactor is Zn(2+).

The protein localises to the cell inner membrane. Its subcellular location is the cytoplasm. The enzyme catalyses ATP + H2O + cellular proteinSide 1 = ADP + phosphate + cellular proteinSide 2.. Its function is as follows. Part of the Sec protein translocase complex. Interacts with the SecYEG preprotein conducting channel. Has a central role in coupling the hydrolysis of ATP to the transfer of proteins into and across the cell membrane, serving both as a receptor for the preprotein-SecB complex and as an ATP-driven molecular motor driving the stepwise translocation of polypeptide chains across the membrane. The polypeptide is Protein translocase subunit SecA (Xanthomonas euvesicatoria pv. vesicatoria (strain 85-10) (Xanthomonas campestris pv. vesicatoria)).